Consider the following 341-residue polypeptide: Glyceraldehyde-3-phosphate dehydrogenase 2 (341 aa).

NAD(+)-binding positions include Arg12 to Ile13, Arg78, and Thr120. D-glyceraldehyde 3-phosphate is bound by residues Ser152–Thr154 and Thr183. Cys153 functions as the Nucleophile in the catalytic mechanism. Asn184 serves as a coordination point for NAD(+). Residues Arg198, Thr211–Gly212, and Arg234 each bind D-glyceraldehyde 3-phosphate. An NAD(+)-binding site is contributed by Asn313.

This sequence belongs to the glyceraldehyde-3-phosphate dehydrogenase family. As to quaternary structure, homotetramer.

It localises to the cytoplasm. The enzyme catalyses D-glyceraldehyde 3-phosphate + phosphate + NAD(+) = (2R)-3-phospho-glyceroyl phosphate + NADH + H(+). It functions in the pathway carbohydrate degradation; glycolysis; pyruvate from D-glyceraldehyde 3-phosphate: step 1/5. In terms of biological role, catalyzes the oxidative phosphorylation of glyceraldehyde 3-phosphate (G3P) to 1,3-bisphosphoglycerate (BPG) using the cofactor NAD. The first reaction step involves the formation of a hemiacetal intermediate between G3P and a cysteine residue, and this hemiacetal intermediate is then oxidized to a thioester, with concomitant reduction of NAD to NADH. The reduced NADH is then exchanged with the second NAD, and the thioester is attacked by a nucleophilic inorganic phosphate to produce BPG. The protein is Glyceraldehyde-3-phosphate dehydrogenase 2 (gapA2) of Staphylococcus aureus (strain COL).